We begin with the raw amino-acid sequence, 212 residues long: MNVFRLSGDLSHLAAIIILLLKIWKSRSCAGISGKSQLLFALVFTTRYLDLLTSFISLYNTSMKVIYIGCAYATVYLIYMKFKATYDGNHDTFRVEFLVVPVGGLSVLVNHDFSPLEILWTFSIYLESVAILPQLFMISKTGEAETITTHYLFFLGLYRALYLFNWIWRYSFEGFFDLIAIVAGVVQTILYCDFFYLYVTKVLKGKKLSLPA.

Residues 1–4 are Lumenal-facing; it reads MNVF. The chain crosses the membrane as a helical span at residues 5–24; the sequence is RLSGDLSHLAAIIILLLKIW. Topologically, residues 25 to 32 are cytoplasmic; sequence KSRSCAGI. The helical transmembrane segment at 33-52 threads the bilayer; the sequence is SGKSQLLFALVFTTRYLDLL. Positions 47 to 48 are interaction with the K-D-E-L motif on target proteins; sequence RY. At 53–58 the chain is on the lumenal side; that stretch reads TSFISL. A helical transmembrane segment spans residues 59 to 79; it reads YNTSMKVIYIGCAYATVYLIY. At 80-92 the chain is on the cytoplasmic side; the sequence is MKFKATYDGNHDT. The helical transmembrane segment at 93–110 threads the bilayer; it reads FRVEFLVVPVGGLSVLVN. Residues 111-116 are Lumenal-facing; that stretch reads HDFSPL. The helical transmembrane segment at 117–135 threads the bilayer; sequence EILWTFSIYLESVAILPQL. Topologically, residues 136–149 are cytoplasmic; that stretch reads FMISKTGEAETITT. Residues 150–168 form a helical membrane-spanning segment; sequence HYLFFLGLYRALYLFNWIW. The interval 159 to 169 is interaction with the K-D-E-L motif on target proteins; sequence RALYLFNWIWR. Residues 169-178 are Lumenal-facing; it reads RYSFEGFFDL. A helical transmembrane segment spans residues 179 to 199; sequence IAIVAGVVQTILYCDFFYLYV. Residues 200–212 are Cytoplasmic-facing; the sequence is TKVLKGKKLSLPA. An important for recycling of cargo proteins with the sequence motif K-D-E-L from the Golgi to the endoplasmic reticulum region spans residues 204-207; sequence KGKK.

This sequence belongs to the ERD2 family.

Its subcellular location is the endoplasmic reticulum membrane. It is found in the golgi apparatus membrane. The protein resides in the cytoplasmic vesicle. It localises to the COPI-coated vesicle membrane. Its function is as follows. Receptor for the C-terminal sequence motif K-D-E-L that is present on endoplasmic reticulum resident proteins and that mediates their recycling from the Golgi back to the endoplasmic reticulum. Binding is pH dependent, and is optimal at pH 5-5.4. This chain is ER lumen protein-retaining receptor 2 (kdelr2), found in Xenopus tropicalis (Western clawed frog).